The chain runs to 190 residues: 3-isopropylmalate dehydratase small subunit (190 aa).

Belongs to the LeuD family. LeuD type 1 subfamily. As to quaternary structure, heterodimer of LeuC and LeuD.

It carries out the reaction (2R,3S)-3-isopropylmalate = (2S)-2-isopropylmalate. The protein operates within amino-acid biosynthesis; L-leucine biosynthesis; L-leucine from 3-methyl-2-oxobutanoate: step 2/4. Functionally, catalyzes the isomerization between 2-isopropylmalate and 3-isopropylmalate, via the formation of 2-isopropylmaleate. The protein is 3-isopropylmalate dehydratase small subunit of Staphylococcus aureus (strain USA300).